A 339-amino-acid polypeptide reads, in one-letter code: Serpentine receptor class alpha-22 (339 aa).

The next 6 membrane-spanning stretches (helical) occupy residues 33–53 (IFIS…IQAL), 110–130 (VVDL…VFSL), 150–170 (FIAI…FYIA), 199–219 (VRTM…YLSV), 250–270 (IFII…NLLL), and 284–304 (IALF…VIYF).

This sequence belongs to the nematode receptor-like protein sra family.

Its subcellular location is the membrane. In Caenorhabditis elegans, this protein is Serpentine receptor class alpha-22 (sra-22).